The chain runs to 118 residues: Small ribosomal subunit protein uS13 (118 aa).

A disordered region spans residues 94-118 (SLPVRGQRTKTNARTRKGPRKPIKK).

It belongs to the universal ribosomal protein uS13 family. In terms of assembly, part of the 30S ribosomal subunit. Forms a loose heterodimer with protein S19. Forms two bridges to the 50S subunit in the 70S ribosome.

Located at the top of the head of the 30S subunit, it contacts several helices of the 16S rRNA. In the 70S ribosome it contacts the 23S rRNA (bridge B1a) and protein L5 of the 50S subunit (bridge B1b), connecting the 2 subunits; these bridges are implicated in subunit movement. Contacts the tRNAs in the A and P-sites. In Haemophilus influenzae (strain 86-028NP), this protein is Small ribosomal subunit protein uS13.